A 418-amino-acid chain; its full sequence is Glutamyl-tRNA reductase (418 aa).

Substrate contacts are provided by residues 49–52 (TCNR), Ser109, 114–116 (EPQ), and Gln120. Cys50 acts as the Nucleophile in catalysis. 189–194 (GAGETI) provides a ligand contact to NADP(+).

The protein belongs to the glutamyl-tRNA reductase family. As to quaternary structure, homodimer.

The catalysed reaction is (S)-4-amino-5-oxopentanoate + tRNA(Glu) + NADP(+) = L-glutamyl-tRNA(Glu) + NADPH + H(+). The protein operates within porphyrin-containing compound metabolism; protoporphyrin-IX biosynthesis; 5-aminolevulinate from L-glutamyl-tRNA(Glu): step 1/2. In terms of biological role, catalyzes the NADPH-dependent reduction of glutamyl-tRNA(Glu) to glutamate 1-semialdehyde (GSA). The sequence is that of Glutamyl-tRNA reductase from Escherichia coli O1:K1 / APEC.